The sequence spans 107 residues: Cytochrome c oxidase assembly protein COX16 homolog, mitochondrial (107 aa).

The Mitochondrial matrix segment spans residues 1-14; it reads MFGYAVRRALRKSK. The helical transmembrane segment at 15–37 threads the bilayer; the sequence is TLRYGVPMLLLIVGGSFGLREFS. Topologically, residues 38–107 are mitochondrial intermembrane; it reads QIRYDAVKIK…PEILKTNKTT (70 aa). A disordered region spans residues 80 to 107; that stretch reads NIRGPRPWEDPDLLQGRNPEILKTNKTT.

The protein belongs to the COX16 family. As to quaternary structure, associates with the MITRAC complex. Interacts with MT-CO2/COX; specifically interacts with newly synthesized MT-CO2/COX. Interacts with SCO1, SCO2 and COA6.

The protein resides in the mitochondrion inner membrane. In terms of biological role, required for the assembly of the mitochondrial respiratory chain complex IV (CIV), also known as cytochrome c oxidase. Promotes the insertion of copper into the active site of cytochrome c oxidase subunit II (MT-CO2/COX2). Interacts specifically with newly synthesized MT-CO2/COX and its copper center-forming metallochaperones SCO1, SCO2 and COA6. Probably facilitates MT-CO2/COX2 association with the MITRAC assembly intermediate containing MT-CO1/COX1, thereby participating in merging the MT-CO1/COX1 and MT-CO2/COX2 assembly lines. In Bos taurus (Bovine), this protein is Cytochrome c oxidase assembly protein COX16 homolog, mitochondrial.